Here is a 627-residue protein sequence, read N- to C-terminus: Threonine--tRNA ligase (627 aa).

The interval 221-523 (DHRKLGRELG…LIEHFAGDFP (303 aa)) is catalytic. The Zn(2+) site is built by Cys319, His370, and His500.

Belongs to the class-II aminoacyl-tRNA synthetase family. Homodimer. The cofactor is Zn(2+).

Its subcellular location is the cytoplasm. It carries out the reaction tRNA(Thr) + L-threonine + ATP = L-threonyl-tRNA(Thr) + AMP + diphosphate + H(+). Its function is as follows. Catalyzes the attachment of threonine to tRNA(Thr) in a two-step reaction: L-threonine is first activated by ATP to form Thr-AMP and then transferred to the acceptor end of tRNA(Thr). Also edits incorrectly charged L-seryl-tRNA(Thr). The chain is Threonine--tRNA ligase from Gloeobacter violaceus (strain ATCC 29082 / PCC 7421).